Here is a 355-residue protein sequence, read N- to C-terminus: Diacylglycerol O-acyltransferase 2A (355 aa).

The next 2 membrane-spanning stretches (helical) occupy residues 41-61 (LLWCSMMSICMFIFFFLCSIP) and 62-78 (VLLWFPIILYLTWILVW). A glycan (N-linked (GlcNAc...) asparagine) is linked at Asn142.

This sequence belongs to the diacylglycerol acyltransferase family.

The protein resides in the endoplasmic reticulum membrane. It carries out the reaction an acyl-CoA + a 1,2-diacyl-sn-glycerol = a triacyl-sn-glycerol + CoA. Its pathway is glycerolipid metabolism; triacylglycerol biosynthesis. Functionally, catalyzes the terminal and only committed step in triacylglycerol synthesis by using diacylglycerol and fatty acyl CoA as substrates. Required for storage lipid synthesis. The polypeptide is Diacylglycerol O-acyltransferase 2A (DGAT2A) (Umbelopsis ramanniana (Oleaginous fungus)).